The sequence spans 215 residues: 2-dehydro-3-deoxy-phosphogluconate aldolase (215 aa).

Glu-46 functions as the Proton acceptor in the catalytic mechanism. Pyruvate contacts are provided by Arg-50, Thr-74, and Lys-134. Residue Lys-134 is the Schiff-base intermediate with substrate of the active site.

Belongs to the KHG/KDPG aldolase family. In terms of assembly, homotrimer.

It catalyses the reaction 2-dehydro-3-deoxy-6-phospho-D-gluconate = D-glyceraldehyde 3-phosphate + pyruvate. The protein operates within carbohydrate acid metabolism; 2-dehydro-3-deoxy-D-gluconate degradation; D-glyceraldehyde 3-phosphate and pyruvate from 2-dehydro-3-deoxy-D-gluconate: step 2/2. In terms of biological role, involved in the degradation of glucose via the Entner-Doudoroff pathway. Catalyzes the reversible, stereospecific retro-aldol cleavage of 2-keto-3-deoxy-6-phosphogluconate (KDPG) to pyruvate and D-glyceraldehyde-3-phosphate. Involved in the degradation of 3,6-anhydro-L-galactose (L-AnG), which is the major monomeric sugar of red macroalgae. The cleavage of KDPG to glyceraldehyde 3-phosphate and pyruvate is the sixth step of this pathway. This Pseudoalteromonas atlantica (strain T6c / ATCC BAA-1087) protein is 2-dehydro-3-deoxy-phosphogluconate aldolase.